Here is a 166-residue protein sequence, read N- to C-terminus: Small ribosomal subunit protein uS5 (166 aa).

An S5 DRBM domain is found at 11–74; the sequence is LQEKLIAVNR…EKARRNMINV (64 aa).

Belongs to the universal ribosomal protein uS5 family. Part of the 30S ribosomal subunit. Contacts proteins S4 and S8.

With S4 and S12 plays an important role in translational accuracy. Functionally, located at the back of the 30S subunit body where it stabilizes the conformation of the head with respect to the body. This Pasteurella multocida (strain Pm70) protein is Small ribosomal subunit protein uS5.